Consider the following 257-residue polypeptide: tRNA (guanine-N(1)-)-methyltransferase (257 aa).

S-adenosyl-L-methionine contacts are provided by residues Gly112 and 136 to 141 (LGDYVL).

The protein belongs to the RNA methyltransferase TrmD family. As to quaternary structure, homodimer.

Its subcellular location is the cytoplasm. The catalysed reaction is guanosine(37) in tRNA + S-adenosyl-L-methionine = N(1)-methylguanosine(37) in tRNA + S-adenosyl-L-homocysteine + H(+). Specifically methylates guanosine-37 in various tRNAs. This Salinispora arenicola (strain CNS-205) protein is tRNA (guanine-N(1)-)-methyltransferase.